The primary structure comprises 446 residues: Peptide chain release factor 1, mitochondrial (446 aa).

A mitochondrion-targeting transit peptide spans 1 to 62 (MSHHLCIWLF…LLNKSWSRGC (62 aa)). The interval 298–362 (PKDLRVDTFR…LRARLYQQII (65 aa)) is GGQ domain. The GGQ motif lies at 312 to 314 (GGQ). Glutamine 314 carries the post-translational modification N5-methylglutamine.

The protein belongs to the prokaryotic/mitochondrial release factor family. Post-translationally, methylation of glutamine in the GGQ triplet by HEMK1 is conserved from bacteria to mammals.

Its subcellular location is the mitochondrion. Mitochondrial peptide chain release factor that directs the termination of translation in response to the peptide chain non-canonical stop codons AGG and AGA. Non-canonical termination codons AGG and AGA are found at the end of MT-CO1/COX1 and MT-ND6/ND6 open reading frames, respectively. Recognizes non-canonical stop codons via a network of interactions between the codon, MTRF1 and the ribosomal RNA (rRNA): in contrast to other translation release factors, which identify the codon in the A-site via direct interactions of amino acid side chains with the bases, MTRF1 repositions the first 2 bases of the stop codon to use an intricate network of interactions that includes residues of the release factor, the rRNA of the small ribosomal subunit, as well as neighboring bases of the mRNA. This chain is Peptide chain release factor 1, mitochondrial, found in Mus musculus (Mouse).